The chain runs to 211 residues: Protein-methionine-sulfoxide reductase heme-binding subunit MsrQ (211 aa).

A run of 5 helical transmembrane segments spans residues 8-28, 54-74, 82-102, 116-136, and 153-173; these read VIWLKVCLHLAGLLPFLWLVW, FLLAALLITPLARYAKQPLLI, LWCFAWATLHLTSYALLELGV, PYLTLGIISWVILLALAFTST, and FVYLVAILAPIHYLWSVKIIS.

The protein belongs to the MsrQ family. As to quaternary structure, heterodimer of a catalytic subunit (MsrP) and a heme-binding subunit (MsrQ). It depends on FMN as a cofactor. Heme b is required as a cofactor.

The protein resides in the cell inner membrane. In terms of biological role, part of the MsrPQ system that repairs oxidized periplasmic proteins containing methionine sulfoxide residues (Met-O), using respiratory chain electrons. Thus protects these proteins from oxidative-stress damage caused by reactive species of oxygen and chlorine generated by the host defense mechanisms. MsrPQ is essential for the maintenance of envelope integrity under bleach stress, rescuing a wide series of structurally unrelated periplasmic proteins from methionine oxidation, including the primary periplasmic chaperone SurA and the lipoprotein Pal. MsrQ provides electrons for reduction to the reductase catalytic subunit MsrP, using the quinone pool of the respiratory chain. This is Protein-methionine-sulfoxide reductase heme-binding subunit MsrQ from Escherichia coli O6:K15:H31 (strain 536 / UPEC).